The chain runs to 3079 residues: Inhibitory regulator protein IRA2 (3079 aa).

The tract at residues 392–554 (NQNAHQGSSS…RASYDAHKTG (163 aa)) is disordered. The segment covering 399-416 (SSSPSSSSPSSPPSSSSS) has biased composition (low complexity). Over residues 417–442 (DNNNQNIIAKSLSRQLSHHQSYIQQQ) the composition is skewed to polar residues. The span at 449-477 (SSWTTNSQSSTSLSSSTSNSTTTDFSTHT) shows a compositional bias: low complexity. The span at 488–497 (DTPTMSNITI) shows a compositional bias: polar residues. Positions 498 to 528 (SASSLLSQTPTPTTQLQQRLNSAAAAAAAAA) are enriched in low complexity. Over residues 529-546 (SPSNSTPTGYTAEQQSRA) the composition is skewed to polar residues. Thr635 bears the Phosphothreonine mark. Disordered regions lie at residues 867–898 (FKGSSPSLCSTTRSRSGSTSQSSMTPVSPLGL), 912–935 (GSSTSRNSDNVNSLNSSPKNLSSD), and 952–980 (GPSSIIRNKIPTTLTSPPGTEKSSPVQRP). Low complexity-rich tracts occupy residues 873 to 894 (SLCSTTRSRSGSTSQSSMTPVS) and 921 to 934 (NVNSLNSSPKNLSS). Residues 961–980 (IPTTLTSPPGTEKSSPVQRP) show a composition bias toward polar residues. The region spanning 1717-1922 (NATHIVVAQL…DRIFRFLAEL (206 aa)) is the Ras-GAP domain.

It localises to the cytoplasm. Functionally, inhibitory regulator of the Ras-cyclic AMP pathway. Stimulates the GTPase activity of Ras proteins. The polypeptide is Inhibitory regulator protein IRA2 (IRA2) (Saccharomyces cerevisiae (strain ATCC 204508 / S288c) (Baker's yeast)).